Consider the following 403-residue polypeptide: MTVEMSVDRSSFDEVMVPCYNPMEFIPVKGFGSRIWDQQGHEYIDFAGGIAVSCLGHCHPVMVQALTTQANKLWHLSNVMTNEPALRLAKKLTQVSFAEKVFFANSGAEANEAALKLARRYAADVYGPEKSEIIAFNQGFHGRTFFTVSVGGQATYSDGFGPKPGDIVHLPYNDLAALQAQISDRTCAVMMEPLQGEGGIVSPSAEFVQAVRELCDKHNALLIFDEVQTGNGRTGDFYAYQGIGVTPDILATAKSLGGGFPIGAMLTTAKIAEHMKVGVHGSTYGGNPLACAVAEAVVDFVAQPEILAGVKQREQWMRAELEKINQKYQLFKEIRGKGLLLGAALNDEWQGRARDILVAAGKQGLMVLVAGASVVRFTPSLIISQQEIEEGMARLDKAIATLM.

Residues 107 to 108 (GA) and Phe140 contribute to the pyridoxal 5'-phosphate site. Arg143 contacts N(2)-acetyl-L-ornithine. 225–228 (DEVQ) is a binding site for pyridoxal 5'-phosphate. Position 254 is an N6-(pyridoxal phosphate)lysine (Lys254). Ser282 serves as a coordination point for N(2)-acetyl-L-ornithine. Position 283 (Thr283) interacts with pyridoxal 5'-phosphate.

The protein belongs to the class-III pyridoxal-phosphate-dependent aminotransferase family. ArgD subfamily. Homodimer. The cofactor is pyridoxal 5'-phosphate.

It is found in the cytoplasm. It carries out the reaction N(2)-acetyl-L-ornithine + 2-oxoglutarate = N-acetyl-L-glutamate 5-semialdehyde + L-glutamate. It participates in amino-acid biosynthesis; L-arginine biosynthesis; N(2)-acetyl-L-ornithine from L-glutamate: step 4/4. This Vibrio cholerae serotype O1 (strain ATCC 39315 / El Tor Inaba N16961) protein is Acetylornithine aminotransferase.